Reading from the N-terminus, the 477-residue chain is Beta-agarase D (477 aa).

The signal sequence occupies residues 1–20 (MKRSILLAIIAFLQFFTSYG). One can recognise a GH16 domain in the interval 22-378 (YDWDNVPIPA…WIRVYKPVNA (357 aa)). Residues 94 to 104 (MQNHVAVSGGN), 123 to 125 (NNT), Glu174, Glu179, Arg206, and Glu340 contribute to the substrate site. Glu174 functions as the Nucleophile in the catalytic mechanism. Residue Glu179 is the Proton donor of the active site. Positions 382 to 391 (NSAETTSTVE) are enriched in low complexity. Residues 382-402 (NSAETTSTVEKPASFEPQGQP) form a disordered region.

The protein belongs to the glycosyl hydrolase 16 family.

The protein localises to the secreted. The catalysed reaction is Hydrolysis of (1-&gt;4)-beta-D-galactosidic linkages in agarose, giving the tetramer as the predominant product.. Its function is as follows. Cleaves the beta-1,4-linkages between beta-D-galactose and alpha-L-3,6-anhydro-galactose residues in agarose. Cleaves agarose in a random manner with retention of the anomeric-bond configuration, producing beta-anomers that give rise progressively to alpha-anomers when mutarotation takes place. Requires at least 4 consecutive agarose units and is highly intolerant to modifications. The chain is Beta-agarase D (agaD) from Zobellia galactanivorans (strain DSM 12802 / CCUG 47099 / CIP 106680 / NCIMB 13871 / Dsij).